A 55-amino-acid polypeptide reads, in one-letter code: Large ribosomal subunit protein bL33 (55 aa).

The protein belongs to the bacterial ribosomal protein bL33 family.

The sequence is that of Large ribosomal subunit protein bL33 from Beijerinckia indica subsp. indica (strain ATCC 9039 / DSM 1715 / NCIMB 8712).